Reading from the N-terminus, the 152-residue chain is Transcriptional regulator MraZ (152 aa).

SpoVT-AbrB domains follow at residues 5–52 (VTSI…PLHE) and 81–124 (ATEC…QDKQ).

It belongs to the MraZ family. As to quaternary structure, forms oligomers.

The protein resides in the cytoplasm. The protein localises to the nucleoid. This is Transcriptional regulator MraZ from Actinobacillus pleuropneumoniae serotype 3 (strain JL03).